We begin with the raw amino-acid sequence, 343 residues long: Holliday junction branch migration complex subunit RuvB (343 aa).

Residues 4-193 (TDNLTAAQPQ…FGIVSRLEFY (190 aa)) are large ATPase domain (RuvB-L). ATP is bound by residues Leu-32, Arg-33, Gly-74, Lys-77, Thr-78, Thr-79, 140–142 (EDY), Arg-183, Tyr-193, and Arg-230. Thr-78 lines the Mg(2+) pocket. The tract at residues 194–264 (ENRDLTTIVS…IADAALSMLD (71 aa)) is small ATPAse domain (RuvB-S). The segment at 267 to 343 (AQGLDVMDRK…YLHFGLPVEK (77 aa)) is head domain (RuvB-H). 2 residues coordinate DNA: Arg-322 and Arg-327.

Belongs to the RuvB family. Homohexamer. Forms an RuvA(8)-RuvB(12)-Holliday junction (HJ) complex. HJ DNA is sandwiched between 2 RuvA tetramers; dsDNA enters through RuvA and exits via RuvB. An RuvB hexamer assembles on each DNA strand where it exits the tetramer. Each RuvB hexamer is contacted by two RuvA subunits (via domain III) on 2 adjacent RuvB subunits; this complex drives branch migration. In the full resolvosome a probable DNA-RuvA(4)-RuvB(12)-RuvC(2) complex forms which resolves the HJ.

The protein resides in the cytoplasm. It carries out the reaction ATP + H2O = ADP + phosphate + H(+). Its function is as follows. The RuvA-RuvB-RuvC complex processes Holliday junction (HJ) DNA during genetic recombination and DNA repair, while the RuvA-RuvB complex plays an important role in the rescue of blocked DNA replication forks via replication fork reversal (RFR). RuvA specifically binds to HJ cruciform DNA, conferring on it an open structure. The RuvB hexamer acts as an ATP-dependent pump, pulling dsDNA into and through the RuvAB complex. RuvB forms 2 homohexamers on either side of HJ DNA bound by 1 or 2 RuvA tetramers; 4 subunits per hexamer contact DNA at a time. Coordinated motions by a converter formed by DNA-disengaged RuvB subunits stimulates ATP hydrolysis and nucleotide exchange. Immobilization of the converter enables RuvB to convert the ATP-contained energy into a lever motion, pulling 2 nucleotides of DNA out of the RuvA tetramer per ATP hydrolyzed, thus driving DNA branch migration. The RuvB motors rotate together with the DNA substrate, which together with the progressing nucleotide cycle form the mechanistic basis for DNA recombination by continuous HJ branch migration. Branch migration allows RuvC to scan DNA until it finds its consensus sequence, where it cleaves and resolves cruciform DNA. This chain is Holliday junction branch migration complex subunit RuvB, found in Neisseria meningitidis serogroup C (strain 053442).